Reading from the N-terminus, the 453-residue chain is tRNA modification GTPase MnmE (453 aa).

Residues Arg22, Glu79, and Lys119 each contribute to the (6S)-5-formyl-5,6,7,8-tetrahydrofolate site. Positions Gly215–Gly376 constitute a TrmE-type G domain. Residue Asn225 coordinates K(+). Residues Asn225–Ser230, Thr244–Thr250, Asp269–Gly272, and Asn334–Asp337 contribute to the GTP site. Residue Ser229 participates in Mg(2+) binding. Thr244, Ile246, and Thr249 together coordinate K(+). Mg(2+) is bound at residue Thr250. Lys453 is a (6S)-5-formyl-5,6,7,8-tetrahydrofolate binding site.

Belongs to the TRAFAC class TrmE-Era-EngA-EngB-Septin-like GTPase superfamily. TrmE GTPase family. Homodimer. Heterotetramer of two MnmE and two MnmG subunits. Requires K(+) as cofactor.

It localises to the cytoplasm. In terms of biological role, exhibits a very high intrinsic GTPase hydrolysis rate. Involved in the addition of a carboxymethylaminomethyl (cmnm) group at the wobble position (U34) of certain tRNAs, forming tRNA-cmnm(5)s(2)U34. This Vibrio parahaemolyticus serotype O3:K6 (strain RIMD 2210633) protein is tRNA modification GTPase MnmE.